Here is a 177-residue protein sequence, read N- to C-terminus: Large ribosomal subunit protein uL6 (177 aa).

Belongs to the universal ribosomal protein uL6 family. Part of the 50S ribosomal subunit.

In terms of biological role, this protein binds to the 23S rRNA, and is important in its secondary structure. It is located near the subunit interface in the base of the L7/L12 stalk, and near the tRNA binding site of the peptidyltransferase center. The protein is Large ribosomal subunit protein uL6 of Xanthobacter autotrophicus (strain ATCC BAA-1158 / Py2).